The sequence spans 258 residues: Tryptophan synthase alpha chain (258 aa).

Catalysis depends on proton acceptor residues glutamate 47 and aspartate 58.

The protein belongs to the TrpA family. Tetramer of two alpha and two beta chains.

It catalyses the reaction (1S,2R)-1-C-(indol-3-yl)glycerol 3-phosphate + L-serine = D-glyceraldehyde 3-phosphate + L-tryptophan + H2O. It functions in the pathway amino-acid biosynthesis; L-tryptophan biosynthesis; L-tryptophan from chorismate: step 5/5. Its function is as follows. The alpha subunit is responsible for the aldol cleavage of indoleglycerol phosphate to indole and glyceraldehyde 3-phosphate. The protein is Tryptophan synthase alpha chain of Bacillus cereus (strain ZK / E33L).